The primary structure comprises 213 residues: Imidazole glycerol phosphate synthase subunit HisH (213 aa).

In terms of domain architecture, Glutamine amidotransferase type-1 spans S4–P213. The active-site Nucleophile is the C83. Catalysis depends on residues H193 and E195.

Heterodimer of HisH and HisF.

Its subcellular location is the cytoplasm. It carries out the reaction 5-[(5-phospho-1-deoxy-D-ribulos-1-ylimino)methylamino]-1-(5-phospho-beta-D-ribosyl)imidazole-4-carboxamide + L-glutamine = D-erythro-1-(imidazol-4-yl)glycerol 3-phosphate + 5-amino-1-(5-phospho-beta-D-ribosyl)imidazole-4-carboxamide + L-glutamate + H(+). The enzyme catalyses L-glutamine + H2O = L-glutamate + NH4(+). It participates in amino-acid biosynthesis; L-histidine biosynthesis; L-histidine from 5-phospho-alpha-D-ribose 1-diphosphate: step 5/9. IGPS catalyzes the conversion of PRFAR and glutamine to IGP, AICAR and glutamate. The HisH subunit catalyzes the hydrolysis of glutamine to glutamate and ammonia as part of the synthesis of IGP and AICAR. The resulting ammonia molecule is channeled to the active site of HisF. In Burkholderia pseudomallei (strain K96243), this protein is Imidazole glycerol phosphate synthase subunit HisH.